Here is a 157-residue protein sequence, read N- to C-terminus: uncharacterized protein (157 aa).

One can recognise an N-acetyltransferase domain in the interval Leu-9–Glu-154.

This is an uncharacterized protein from Bacillus mycoides (strain KBAB4) (Bacillus weihenstephanensis).